An 89-amino-acid polypeptide reads, in one-letter code: Small ribosomal subunit protein uS15 (89 aa).

The protein belongs to the universal ribosomal protein uS15 family. Part of the 30S ribosomal subunit. Forms a bridge to the 50S subunit in the 70S ribosome, contacting the 23S rRNA.

One of the primary rRNA binding proteins, it binds directly to 16S rRNA where it helps nucleate assembly of the platform of the 30S subunit by binding and bridging several RNA helices of the 16S rRNA. Functionally, forms an intersubunit bridge (bridge B4) with the 23S rRNA of the 50S subunit in the ribosome. This Bacteroides fragilis (strain ATCC 25285 / DSM 2151 / CCUG 4856 / JCM 11019 / LMG 10263 / NCTC 9343 / Onslow / VPI 2553 / EN-2) protein is Small ribosomal subunit protein uS15.